The following is a 622-amino-acid chain: Low affinity potassium transport system protein Kup (622 aa).

The next 12 helical transmembrane spans lie at 9-29, 49-69, 103-123, 137-157, 165-185, 213-233, 247-267, 276-296, 337-357, 363-383, 396-416, and 419-439; these read LPAI…TSPL, VFGF…IKYL, VIMG…TPAI, PQLD…LFMI, VGKL…VLGL, VSFI…ALYA, WFTV…ALLL, PFFL…AALA, IYIP…IVSF, LAAA…ILST, LVAL…SANL, and LLSG…IMTT.

Belongs to the HAK/KUP transporter (TC 2.A.72) family.

Its subcellular location is the cell inner membrane. The catalysed reaction is K(+)(in) + H(+)(in) = K(+)(out) + H(+)(out). Its function is as follows. Responsible for the low-affinity transport of potassium into the cell. Likely operates as a K(+):H(+) symporter. This chain is Low affinity potassium transport system protein Kup, found in Salmonella arizonae (strain ATCC BAA-731 / CDC346-86 / RSK2980).